A 335-amino-acid chain; its full sequence is N-acetyl-gamma-glutamyl-phosphate reductase (335 aa).

Cysteine 155 is a catalytic residue.

This sequence belongs to the NAGSA dehydrogenase family. Type 1 subfamily.

The protein resides in the cytoplasm. It carries out the reaction N-acetyl-L-glutamate 5-semialdehyde + phosphate + NADP(+) = N-acetyl-L-glutamyl 5-phosphate + NADPH + H(+). The protein operates within amino-acid biosynthesis; L-arginine biosynthesis; N(2)-acetyl-L-ornithine from L-glutamate: step 3/4. Catalyzes the NADPH-dependent reduction of N-acetyl-5-glutamyl phosphate to yield N-acetyl-L-glutamate 5-semialdehyde. The polypeptide is N-acetyl-gamma-glutamyl-phosphate reductase (Pasteurella multocida (strain Pm70)).